The primary structure comprises 708 residues: MEDSDSNTDKKFFFKKRRIDSYNYSDEEDNNSSMNSDMTYTNDALKTSSGNAPTISKLTKTYGIGAKLLSSMGYVAGKGLGKDGSGITTPIETQSRPMHNAGLGMFSNTNSSNYHSENEDYLSSEDEVVEGIEQVKFNKTSTEVLGEALLNDSGDMTIVRTLRELRLAGVQLPESILKELDPLNAVPKPKKDVVVEILQELLGIEKSLEAIRQRTSPLEVQVKEYYGQERLLSELEVTLRDESKHVSLYDKIGAILKLSDDELIDRLTSCLLRKELLIEFDLDHLEKPNDILDELTQIIELLAYRMDTTSKFLNRTQTTIFKVIYPKLKKFWEGFDMTKSKIDSAITLLLDFQQVLSFIGCKEHIMEEFVYPKLLQELDNWELHDEVDHVSPRIWVLDFMVLIDDKIKDTIVDKIEAKFFAYCKNWYHRESFCITNSDIIFIKELICERRYYKILCKEFLPKFLDELWERHNDPIYELEDWKEKQEWKEKDSGFFYFMKKLRSYTHYFHPKQYELMMRGTFNNINKILYQWHLYSTVEDLHKSKWWLNWLMNTVFEHSLPTEIELSEIRKSYNIFAMSHRYHLDKSTLDEDFDLRQGLRNLMETQVIDDISQSEQEPTYTVQNIPLGKVSSSFKDVVEDYCLEKGYLISKIPNRYTQLPYGRDQDCIVPLFEIRNGKKKMEVALKHDILWVEDSSGTFKPIYLWALDL.

The G-patch domain occupies 61–108; that stretch reads TYGIGAKLLSSMGYVAGKGLGKDGSGITTPIETQSRPMHNAGLGMFSN.

As to quaternary structure, component of the NTR complex (NTC-related complex), composed of NTR1, NTR2 and PRP43. Interacts with CLF1 and NTR2. Interacts with PRP43 and PRP45.

It localises to the cytoplasm. It is found in the nucleus. Involved in pre-mRNA splicing and spliceosome disassembly. Promotes release of excised lariat intron from the spliceosome by acting as a receptor for PRP43. This targeting of PRP43 leads to disassembly of the spliceosome with the separation of the U2, U5, U6 snRNPs and the NTC complex. The chain is Pre-mRNA-splicing factor SPP382 (SPP382) from Saccharomyces cerevisiae (strain ATCC 204508 / S288c) (Baker's yeast).